A 239-amino-acid chain; its full sequence is Large ribosomal subunit protein uL2 (239 aa).

2 disordered regions span residues 1-20 and 202-239; these read MGHRIKTQNRGRGGPTYRAP and FGGGGHQHTGRPKTVSRGTSPGRKVGSVAARRTGRRKR.

Belongs to the universal ribosomal protein uL2 family. As to quaternary structure, part of the 50S ribosomal subunit. Forms a bridge to the 30S subunit in the 70S ribosome.

One of the primary rRNA binding proteins. Required for association of the 30S and 50S subunits to form the 70S ribosome, for tRNA binding and peptide bond formation. It has been suggested to have peptidyltransferase activity; this is somewhat controversial. Makes several contacts with the 16S rRNA in the 70S ribosome. The polypeptide is Large ribosomal subunit protein uL2 (Methanosphaerula palustris (strain ATCC BAA-1556 / DSM 19958 / E1-9c)).